A 312-amino-acid polypeptide reads, in one-letter code: uncharacterized protein (312 aa).

This is an uncharacterized protein from Saccharomyces cerevisiae (strain ATCC 204508 / S288c) (Baker's yeast).